Consider the following 387-residue polypeptide: Succinate--CoA ligase [ADP-forming] subunit beta (387 aa).

The ATP-grasp domain maps to 9–244; the sequence is KQLFASYGLP…VSQEDDRENR (236 aa). ATP contacts are provided by residues lysine 46, 53-55, glutamate 99, cysteine 102, and glutamate 107; that span reads GRG. The Mg(2+) site is built by asparagine 199 and aspartate 213. Residues asparagine 264 and 321 to 323 contribute to the substrate site; that span reads GIV.

This sequence belongs to the succinate/malate CoA ligase beta subunit family. Heterotetramer of two alpha and two beta subunits. The cofactor is Mg(2+).

It catalyses the reaction succinate + ATP + CoA = succinyl-CoA + ADP + phosphate. The catalysed reaction is GTP + succinate + CoA = succinyl-CoA + GDP + phosphate. It functions in the pathway carbohydrate metabolism; tricarboxylic acid cycle; succinate from succinyl-CoA (ligase route): step 1/1. In terms of biological role, succinyl-CoA synthetase functions in the citric acid cycle (TCA), coupling the hydrolysis of succinyl-CoA to the synthesis of either ATP or GTP and thus represents the only step of substrate-level phosphorylation in the TCA. The beta subunit provides nucleotide specificity of the enzyme and binds the substrate succinate, while the binding sites for coenzyme A and phosphate are found in the alpha subunit. This Legionella pneumophila (strain Paris) protein is Succinate--CoA ligase [ADP-forming] subunit beta.